The primary structure comprises 188 residues: Phosphoribosylglycinamide formyltransferase (188 aa).

12–14 (GSN) contacts N(1)-(5-phospho-beta-D-ribosyl)glycinamide. (6R)-10-formyltetrahydrofolate-binding positions include K66, 91–94 (MRLI), and N108. The active-site Proton donor is the H110.

The protein belongs to the GART family.

The enzyme catalyses N(1)-(5-phospho-beta-D-ribosyl)glycinamide + (6R)-10-formyltetrahydrofolate = N(2)-formyl-N(1)-(5-phospho-beta-D-ribosyl)glycinamide + (6S)-5,6,7,8-tetrahydrofolate + H(+). The protein operates within purine metabolism; IMP biosynthesis via de novo pathway; N(2)-formyl-N(1)-(5-phospho-D-ribosyl)glycinamide from N(1)-(5-phospho-D-ribosyl)glycinamide (10-formyl THF route): step 1/1. Its function is as follows. Catalyzes the transfer of a formyl group from 10-formyltetrahydrofolate to 5-phospho-ribosyl-glycinamide (GAR), producing 5-phospho-ribosyl-N-formylglycinamide (FGAR) and tetrahydrofolate. In Staphylococcus aureus (strain Mu50 / ATCC 700699), this protein is Phosphoribosylglycinamide formyltransferase.